A 104-amino-acid polypeptide reads, in one-letter code: MPEAHMQPAKLQTSLPTTDHGSKKPVSCYLPPLSNAHPMCIEVQNAQNCSSAAATLEPSIISDTCFYKPITKDQLSSRSELNTVRLKCLNSLRGWKILNQLSLT.

The segment at 1–23 (MPEAHMQPAKLQTSLPTTDHGSK) is disordered. Residues 10 to 19 (KLQTSLPTTD) show a composition bias toward polar residues.

In terms of tissue distribution, expressed at low steady-state level in adult placenta, testis, ovary, prostate, fetal kidney, spleen and skeletal muscle.

In Homo sapiens (Human), this protein is Disrupted in renal carcinoma protein 1 (DIRC1).